The chain runs to 352 residues: Phosphoribosylformylglycinamidine cyclo-ligase (352 aa).

This sequence belongs to the AIR synthase family.

Its subcellular location is the cytoplasm. It carries out the reaction 2-formamido-N(1)-(5-O-phospho-beta-D-ribosyl)acetamidine + ATP = 5-amino-1-(5-phospho-beta-D-ribosyl)imidazole + ADP + phosphate + H(+). It functions in the pathway purine metabolism; IMP biosynthesis via de novo pathway; 5-amino-1-(5-phospho-D-ribosyl)imidazole from N(2)-formyl-N(1)-(5-phospho-D-ribosyl)glycinamide: step 2/2. The polypeptide is Phosphoribosylformylglycinamidine cyclo-ligase (Pseudomonas fluorescens (strain Pf0-1)).